Here is a 71-residue protein sequence, read N- to C-terminus: Small ribosomal subunit protein bS18c (71 aa).

This sequence belongs to the bacterial ribosomal protein bS18 family. Part of the 30S ribosomal subunit.

It localises to the plastid. The protein resides in the cyanelle. In Cyanophora paradoxa, this protein is Small ribosomal subunit protein bS18c (rps18).